The primary structure comprises 92 residues: uncharacterized protein (92 aa).

Residues 1-10 (MGLLKKKDST) are compositionally biased toward basic and acidic residues. The tract at residues 1–21 (MGLLKKKDSTSARSSTSPCAD) is disordered. The 51-residue stretch at 16–66 (TSPCADLRNAYHNCFNKWYSEKFVKGQWDKEECVAEWKKYRDCLSENLDGK) folds into the CHCH domain. 2 consecutive short sequence motifs (cx9C motif) follow at residues 19–29 (CADLRNAYHNC) and 48–58 (CVAEWKKYRDC). 2 cysteine pairs are disulfide-bonded: Cys-19–Cys-58 and Cys-29–Cys-48.

It belongs to the TRIAP1/MDM35 family.

This is an uncharacterized protein from Arabidopsis thaliana (Mouse-ear cress).